A 197-amino-acid polypeptide reads, in one-letter code: UPF0200 protein MJ1399 (197 aa).

8–15 (GMPGAGKS) serves as a coordination point for ATP.

It belongs to the UPF0200 family.

The sequence is that of UPF0200 protein MJ1399 from Methanocaldococcus jannaschii (strain ATCC 43067 / DSM 2661 / JAL-1 / JCM 10045 / NBRC 100440) (Methanococcus jannaschii).